Reading from the N-terminus, the 373-residue chain is MSDNSKTRVVVGMSGGVDSSVTALLLKEQGYDVIGIFMKNWDDTDENGVCTATEDYKDVVAVADQIGIPYYSVNFEKEYWDRVFEYFLAEYRAGRTPNPDVMCNKEIKFKAFLDYAMTLGADYVATGHYARVARDEDGTVHMLRGVDNGKDQTYFLSQLSQEQLQKTMFPLGHLKKPEVRKLAEEAGLSTAKKKDSTGICFIGEKNFKNFLSNYLPAQPGRMMTVDGRDMGEHAGLMYYTIGQRGGLGIGGQHGGDNAPWFVVGKDLSKNILYVGQGFYHDSLMSTSLEASQVHFTREMPEEFTLECTAKFRYRQPDSKVTVHVKGDKAEVIFAEPQRAITPGQAVVFYDGEECLGGGLIDNAYRDGQVCQYI.

ATP contacts are provided by residues Gly12–Ser19 and Met38. The segment at Asn98–Asp100 is interaction with target base in tRNA. The active-site Nucleophile is the Cys103. A disulfide bridge links Cys103 with Cys200. Gly127 lines the ATP pocket. The segment at Lys150–Gln152 is interaction with tRNA. Cys200 functions as the Cysteine persulfide intermediate in the catalytic mechanism. The tract at residues Arg312–Tyr313 is interaction with tRNA.

It belongs to the MnmA/TRMU family.

Its subcellular location is the cytoplasm. It catalyses the reaction S-sulfanyl-L-cysteinyl-[protein] + uridine(34) in tRNA + AH2 + ATP = 2-thiouridine(34) in tRNA + L-cysteinyl-[protein] + A + AMP + diphosphate + H(+). Catalyzes the 2-thiolation of uridine at the wobble position (U34) of tRNA, leading to the formation of s(2)U34. The polypeptide is tRNA-specific 2-thiouridylase MnmA (Streptococcus pneumoniae (strain ATCC BAA-255 / R6)).